Here is a 737-residue protein sequence, read N- to C-terminus: METTAAATAAERRRPLFTTEELGGRAVYRVQAATVAAGILLVLYYRATRVPAAGEGRAAWLGMAAAELWFAVYWVIAQSVRWRPFRRRTFRDRLAERYEQNLPGVDIFVCTADPQSEPPSLVISTILSVMAYNYPSEKISVYLSDDGGSILTFYALWEASIFAKKWLPFCKRYNIEPRSPAAYFSESKVHHNLCIPKEWALIKNLYEEMRERIDTATMSGKIPEEMKLKHKGFDEWNSDFTLKNHQPIVQILIDGKNRNAIDDDRNVLPTMVYVAREKRPQYHHNFKAGALNALIRVSSVISDSPVILNVDCDMYSNNSDSIRDALCFFLDEEMGQKIGFVQYPQIFNNMTQNDIYGNSFNVSYHVEMCGLDSVGGCLYIGTGCFHRREILCGRIFSKDYKENWNRGIKERGKENINEIEEKATSLVTCTYEHRTQWGNDIGVKYGFPAEDIITGLAIHCRGWESAFINPKRAAFLGLAPSTLAQNILQHKRWSEGNLTIFLSKYCSFLFGHGKIKLQLQMGYCICGLWAANSLPTLYYVVIPSLGLVKGTPLFPQIMSPWATPFIYVFCVKTLYGLYEALLSGDTLKGWWNGQRMWMVKSITSYLYGFIDTIRKCVGMSKMSFEVTAKVSGHDEAKRYEQEILEFGSSSPEYVIIATVALLNFVCLVGGLSQIMAGVWNMPWNVFLPQAILCGMIVIINMPIYEAMFLRKDNGRIPTAVTLASIGFVMLAFLVPIV.

2 consecutive transmembrane segments (helical) span residues 26 to 45 and 58 to 78; these read AVYR…VLYY and AAWL…VIAQ. Active-site residues include aspartate 146 and aspartate 451. The next 5 membrane-spanning stretches (helical) occupy residues 528 to 548, 551 to 571, 654 to 674, 683 to 703, and 716 to 736; these read LWAA…LGLV, TPLF…VFCV, VIIA…LSQI, WNVF…NMPI, and IPTA…LVPI.

It belongs to the glycosyltransferase 2 family. Plant cellulose synthase-like E subfamily.

The protein localises to the golgi apparatus membrane. Thought to be a Golgi-localized beta-glycan synthase that polymerize the backbones of noncellulosic polysaccharides (hemicelluloses) of plant cell wall. The polypeptide is Cellulose synthase-like protein E1 (CSLE1) (Oryza sativa subsp. japonica (Rice)).